A 573-amino-acid polypeptide reads, in one-letter code: DEAD-box ATP-dependent RNA helicase 47B (573 aa).

The Q motif signature appears at 131 to 159 (KSFEELGLPPLLIDRLNKEGLSTPTEVQS). The 201-residue stretch at 162 to 362 (IPIISQKHDA…RSWGHDPVLV (201 aa)) folds into the Helicase ATP-binding domain. Residue 175 to 182 (SYTGSGKT) coordinates ATP. A DEAD box motif is present at residues 293 to 296 (DEVD). Residues 421 to 565 (TLRRCIHALE…PCEFTEGKLL (145 aa)) form the Helicase C-terminal domain.

The protein belongs to the DEAD box helicase family.

The catalysed reaction is ATP + H2O = ADP + phosphate + H(+). This chain is DEAD-box ATP-dependent RNA helicase 47B, found in Oryza sativa subsp. japonica (Rice).